Reading from the N-terminus, the 373-residue chain is Protein SENSITIVE TO PROTON RHIZOTOXICITY 2 (373 aa).

2 C2H2-type zinc fingers span residues 217–239 (HYCQ…MRAH) and 327–362 (KHCG…VPAH).

As to expression, expressed at low levels in roots (e.g. root tips and lateral roots), leaves (e.g. at the edge of mature leaves, possibly in hydathodes, and in vascular bundles), flowers (e.g. floral filaments), stems, siliques and cotyledons.

Its subcellular location is the nucleus. Functionally, probable transcription factor. Together with STOP1, plays a critical role in tolerance to major stress factors in acid soils such as proton H(+) and aluminum ion Al(3+). Required for the expression of genes in response to acidic stress (e.g. ALMT1 and MATE), and Al-activated citrate exudation. The chain is Protein SENSITIVE TO PROTON RHIZOTOXICITY 2 from Arabidopsis thaliana (Mouse-ear cress).